A 245-amino-acid chain; its full sequence is Phycocyanobilin:ferredoxin oxidoreductase (245 aa).

Belongs to the HY2 family.

The enzyme catalyses (2R,3Z)-phycocyanobilin + 4 oxidized [2Fe-2S]-[ferredoxin] = biliverdin IXalpha + 4 reduced [2Fe-2S]-[ferredoxin] + 4 H(+). Catalyzes the four-electron reduction of biliverdin IX-alpha (2-electron reduction at both the A and D rings); the reaction proceeds via an isolatable 2-electron intermediate, 181,182-dihydrobiliverdin. The polypeptide is Phycocyanobilin:ferredoxin oxidoreductase (pcyA) (Nostoc punctiforme (strain ATCC 29133 / PCC 73102)).